The primary structure comprises 196 residues: Protein hunchback (196 aa).

Disordered regions lie at residues 16–56, 63–82, and 156–196; these read SHHH…SHTN, LKQQ…QQPM, and LTPP…KYMA. The span at 17 to 29 shows a compositional bias: basic residues; it reads HHHHHHHAHHSHH. Composition is skewed to low complexity over residues 33–43 and 65–80; these read SNSNASNSPHQ and QQQQ…QQQQ. Positions 177 to 196 are enriched in basic and acidic residues; it reads EPEKEHDLMSNSSEDMKYMA.

The protein belongs to the hunchback C2H2-type zinc-finger protein family.

It localises to the nucleus. In terms of biological role, gap class segmentation protein that controls development of head structures. The sequence is that of Protein hunchback (hb) from Drosophila adunca (Fruit fly).